The primary structure comprises 305 residues: tRNA pseudouridine synthase B (305 aa).

D39 acts as the Nucleophile in catalysis.

This sequence belongs to the pseudouridine synthase TruB family. Type 1 subfamily.

The catalysed reaction is uridine(55) in tRNA = pseudouridine(55) in tRNA. Responsible for synthesis of pseudouridine from uracil-55 in the psi GC loop of transfer RNAs. The sequence is that of tRNA pseudouridine synthase B from Staphylococcus saprophyticus subsp. saprophyticus (strain ATCC 15305 / DSM 20229 / NCIMB 8711 / NCTC 7292 / S-41).